The primary structure comprises 313 residues: Porphobilinogen deaminase (313 aa).

At Cys-241 the chain carries S-(dipyrrolylmethanemethyl)cysteine.

It belongs to the HMBS family. Monomer. Dipyrromethane serves as cofactor.

The enzyme catalyses 4 porphobilinogen + H2O = hydroxymethylbilane + 4 NH4(+). The protein operates within porphyrin-containing compound metabolism; protoporphyrin-IX biosynthesis; coproporphyrinogen-III from 5-aminolevulinate: step 2/4. It participates in porphyrin-containing compound metabolism; chlorophyll biosynthesis. In terms of biological role, tetrapolymerization of the monopyrrole PBG into the hydroxymethylbilane pre-uroporphyrinogen in several discrete steps. The sequence is that of Porphobilinogen deaminase from Chlorobium phaeobacteroides (strain DSM 266 / SMG 266 / 2430).